The sequence spans 181 residues: Mitochondrial inner membrane protein Mpv17 (181 aa).

4 consecutive transmembrane segments (helical) span residues 20–38 (VIVS…QYLT), 48–70 (TARF…FRVL), 91–113 (FMFS…GFSF), and 140–162 (LINF…AFFW).

The protein belongs to the peroxisomal membrane protein PXMP2/4 family.

It is found in the mitochondrion inner membrane. Its function is as follows. Involved in mitochondria homeostasis. This is Mitochondrial inner membrane protein Mpv17 from Caenorhabditis briggsae.